Reading from the N-terminus, the 111-residue chain is Aspartate 1-decarboxylase (111 aa).

Catalysis depends on serine 25, which acts as the Schiff-base intermediate with substrate; via pyruvic acid. Pyruvic acid (Ser) is present on serine 25. A substrate-binding site is contributed by threonine 57. The active-site Proton donor is tyrosine 58. 73 to 75 (GPA) is a substrate binding site.

This sequence belongs to the PanD family. Heterooctamer of four alpha and four beta subunits. Pyruvate is required as a cofactor. Is synthesized initially as an inactive proenzyme, which is activated by self-cleavage at a specific serine bond to produce a beta-subunit with a hydroxyl group at its C-terminus and an alpha-subunit with a pyruvoyl group at its N-terminus.

It is found in the cytoplasm. It catalyses the reaction L-aspartate + H(+) = beta-alanine + CO2. The protein operates within cofactor biosynthesis; (R)-pantothenate biosynthesis; beta-alanine from L-aspartate: step 1/1. Functionally, catalyzes the pyruvoyl-dependent decarboxylation of aspartate to produce beta-alanine. The polypeptide is Aspartate 1-decarboxylase (Francisella tularensis subsp. holarctica (strain LVS)).